A 347-amino-acid polypeptide reads, in one-letter code: Phenylalanine--tRNA ligase alpha subunit (347 aa).

Residue Glu261 coordinates Mg(2+).

The protein belongs to the class-II aminoacyl-tRNA synthetase family. Phe-tRNA synthetase alpha subunit type 1 subfamily. Tetramer of two alpha and two beta subunits. Mg(2+) serves as cofactor.

It localises to the cytoplasm. It carries out the reaction tRNA(Phe) + L-phenylalanine + ATP = L-phenylalanyl-tRNA(Phe) + AMP + diphosphate + H(+). This chain is Phenylalanine--tRNA ligase alpha subunit, found in Streptococcus pyogenes serotype M18 (strain MGAS8232).